The chain runs to 85 residues: U4-theraphotoxin-Hhn1j (85 aa).

Positions 1 to 22 (MKVTLIAILTCAAVLVLHTTAA) are cleaved as a signal peptide. The propeptide occupies 23-48 (EELEAESQLMEVGMPDTELAAVDEER). 3 disulfides stabilise this stretch: cysteine 52–cysteine 66, cysteine 56–cysteine 77, and cysteine 71–cysteine 82.

This sequence belongs to the neurotoxin 12 (Hwtx-2) family. 02 (Hwtx-2) subfamily. Expressed by the venom gland.

The protein localises to the secreted. Its function is as follows. Postsynaptic neurotoxin. In Cyriopagopus hainanus (Chinese bird spider), this protein is U4-theraphotoxin-Hhn1j.